Reading from the N-terminus, the 415-residue chain is Phosphoglycerate kinase (415 aa).

Residues 27–29, Arg44, 67–70, Arg124, and Arg164 contribute to the substrate site; these read DIN and HQGR. ATP-binding positions include Glu336 and 362-365; that span reads GGHM.

This sequence belongs to the phosphoglycerate kinase family. As to quaternary structure, monomer.

Its subcellular location is the cytoplasm. It carries out the reaction (2R)-3-phosphoglycerate + ATP = (2R)-3-phospho-glyceroyl phosphate + ADP. The protein operates within carbohydrate degradation; glycolysis; pyruvate from D-glyceraldehyde 3-phosphate: step 2/5. This is Phosphoglycerate kinase from Sulfurisphaera tokodaii (strain DSM 16993 / JCM 10545 / NBRC 100140 / 7) (Sulfolobus tokodaii).